A 398-amino-acid chain; its full sequence is Phosphoglycerate kinase (398 aa).

Substrate is bound by residues 20-22, Arg-35, 58-61, Arg-118, and Arg-155; these read DFN and HLGK. Residues Lys-208, Gly-296, Glu-327, and 354 to 357 contribute to the ATP site; that span reads GGDS.

It belongs to the phosphoglycerate kinase family. As to quaternary structure, monomer.

It localises to the cytoplasm. It carries out the reaction (2R)-3-phosphoglycerate + ATP = (2R)-3-phospho-glyceroyl phosphate + ADP. The protein operates within carbohydrate degradation; glycolysis; pyruvate from D-glyceraldehyde 3-phosphate: step 2/5. This chain is Phosphoglycerate kinase, found in Fusobacterium nucleatum subsp. nucleatum (strain ATCC 25586 / DSM 15643 / BCRC 10681 / CIP 101130 / JCM 8532 / KCTC 2640 / LMG 13131 / VPI 4355).